Reading from the N-terminus, the 56-residue chain is Large ribosomal subunit protein bL33 (56 aa).

It belongs to the bacterial ribosomal protein bL33 family.

The sequence is that of Large ribosomal subunit protein bL33 from Acidovorax sp. (strain JS42).